Reading from the N-terminus, the 300-residue chain is Inosose dehydratase (300 aa).

The protein belongs to the IolE/MocC family. The cofactor is glutathione. Requires Co(2+) as cofactor. Mn(2+) serves as cofactor.

It catalyses the reaction scyllo-inosose = 3D-3,5/4-trihydroxycyclohexane-1,2-dione + H2O. Functionally, catalyzes the dehydration of inosose (2-keto-myo-inositol, 2KMI or 2,4,6/3,5-pentahydroxycyclohexanone) to 3D-(3,5/4)-trihydroxycyclohexane-1,2-dione (D-2,3-diketo-4-deoxy-epi-inositol). The polypeptide is Inosose dehydratase (Mesomycoplasma hyopneumoniae (strain 232) (Mycoplasma hyopneumoniae)).